We begin with the raw amino-acid sequence, 184 residues long: Nucleoside triphosphate pyrophosphatase (184 aa).

The active-site Proton acceptor is the Asp-66.

The protein belongs to the Maf family. Requires a divalent metal cation as cofactor.

The protein localises to the cytoplasm. It carries out the reaction a ribonucleoside 5'-triphosphate + H2O = a ribonucleoside 5'-phosphate + diphosphate + H(+). The catalysed reaction is a 2'-deoxyribonucleoside 5'-triphosphate + H2O = a 2'-deoxyribonucleoside 5'-phosphate + diphosphate + H(+). Its function is as follows. Nucleoside triphosphate pyrophosphatase. May have a dual role in cell division arrest and in preventing the incorporation of modified nucleotides into cellular nucleic acids. The polypeptide is Nucleoside triphosphate pyrophosphatase (Prochlorococcus marinus (strain MIT 9313)).